Here is a 513-residue protein sequence, read N- to C-terminus: Protein disulfide-isomerase (513 aa).

Residues 1 to 25 form the signal peptide; it reads MAISKVWISLLLALAVVLSAPAARA. Positions 26–149 constitute a Thioredoxin 1 domain; the sequence is EEAAAAEEAA…IVEYLKKQVG (124 aa). Residues Cys-67 and Cys-70 each act as nucleophile in the active site. Cysteines 67 and 70 form a disulfide. A glycan (N-linked (GlcNAc...) asparagine) is linked at Asn-282. The 120-residue stretch at 369 to 488 folds into the Thioredoxin 2 domain; sequence FRKSEPIPEA…IVDYIRKNKE (120 aa). Catalysis depends on nucleophile residues Cys-411 and Cys-414. Cys-411 and Cys-414 are disulfide-bonded. The segment covering 491-507 has biased composition (low complexity); the sequence is GQAAAATEKAAEPAATE. The disordered stretch occupies residues 491 to 513; that stretch reads GQAAAATEKAAEPAATEPLKDEL. The short motif at 510–513 is the Prevents secretion from ER element; sequence KDEL.

Belongs to the protein disulfide isomerase family.

The protein resides in the endoplasmic reticulum lumen. The catalysed reaction is Catalyzes the rearrangement of -S-S- bonds in proteins.. Its function is as follows. Participates in the folding of proteins containing disulfide bonds, may be involved in glycosylation, prolyl hydroxylation and triglyceride transfer. The polypeptide is Protein disulfide-isomerase (PDI) (Hordeum vulgare (Barley)).